A 469-amino-acid polypeptide reads, in one-letter code: MLSENEIKILEYLSKKREASAEDISKQLNIPIESVFSISQLLKEKGYIEVEEKKVIKYELTDEGKRRLKEGFPEEKLVKLLDGKEKKIHELKDKLGRDFEISIGWAKRKGLVKIDGDTVIPLVKDYEAKEEKEALINPEKANKDILQQLLNRKLLIKKEEKILNIRLIREPLEIKPALIFLTPELLASGEWKKYALREYNVEAYPPFYPIGKKHFFKEFLERLRDLMRDLGFKEVYSDYVEIEFYNFDLLFQAQDHPAREIHDSFAISGKGKLTDEKLIQRVKQIHERGWKYNWDVNISMRLMLRSQTTATTARVLASRPKPPIRVFTIGKVFRPDSIDATHLIEFHQLDGLVIEDNFTFRDLLGTLKEIFNGIGIKEIRFKPAYFPFTEPSVEVYGKIEGLGWVEMAGAGLLRPEILEAVEISSSAGAWGLGIDRLAMLLLGLKDIRLLYATDIEYLRNRKVEINADN.

Residues Thr-309, 348–350, and Phe-388 each bind L-phenylalanine; that span reads QLD. Mg(2+) is bound at residue Glu-390.

Belongs to the class-II aminoacyl-tRNA synthetase family. Phe-tRNA synthetase alpha subunit type 2 subfamily. Tetramer of two alpha and two beta subunits. Mg(2+) is required as a cofactor.

It is found in the cytoplasm. It carries out the reaction tRNA(Phe) + L-phenylalanine + ATP = L-phenylalanyl-tRNA(Phe) + AMP + diphosphate + H(+). The polypeptide is Phenylalanine--tRNA ligase alpha subunit (Sulfurisphaera tokodaii (strain DSM 16993 / JCM 10545 / NBRC 100140 / 7) (Sulfolobus tokodaii)).